A 104-amino-acid polypeptide reads, in one-letter code: MMLKPSIDTLLDKVPSKYSLVILEAKRAHELEAGAPATQEFKSVKSTLRALEEIESGNVVIHPDPEGKREAVRRRAEEERLRKEEEERKIKEQIAKEKEEGEKI.

A disordered region spans residues 60 to 104 (VIHPDPEGKREAVRRRAEEERLRKEEEERKIKEQIAKEKEEGEKI). Residues 63–104 (PDPEGKREAVRRRAEEERLRKEEEERKIKEQIAKEKEEGEKI) are compositionally biased toward basic and acidic residues.

The protein belongs to the RNA polymerase subunit omega family. The RNAP catalytic core consists of 2 alpha, 1 beta, 1 beta' and 1 omega subunit. When a sigma factor is associated with the core the holoenzyme is formed, which can initiate transcription.

It carries out the reaction RNA(n) + a ribonucleoside 5'-triphosphate = RNA(n+1) + diphosphate. In terms of biological role, promotes RNA polymerase assembly. Latches the N- and C-terminal regions of the beta' subunit thereby facilitating its interaction with the beta and alpha subunits. The chain is DNA-directed RNA polymerase subunit omega from Streptococcus sanguinis (strain SK36).